The sequence spans 215 residues: MKYELTATEARVIGCLLEKQVTTPEQYPLSVNGVVTACNQKTNREPVMNLTEQEVQEQLDNLVKRHFLRTVSGFGNRVTKYEQRFCNSEFGDLKLSAAEVALVTTLLLRGAQTPGELRSRASRMHEFSDMAEVESTLERLASREDGPYVVRLAREPGKRESRYMHLFCGDVDELSLQTSAPESASGDIQSRVEALESEVAELKQRLDSLLAHLGE.

It belongs to the UPF0502 family.

The polypeptide is UPF0502 protein YceH (Salmonella paratyphi C (strain RKS4594)).